A 2028-amino-acid polypeptide reads, in one-letter code: Phosphatidylinositol 4-kinase alpha 1 (2028 aa).

The disordered stretch occupies residues Pro184–Ser241. Over residues Gln192 to Tyr215 the composition is skewed to polar residues. Positions Ser231 to Ser241 are enriched in low complexity. One can recognise a PIK helical domain in the interval Thr1483–Gln1659. Residues Val1660 to Val1773 form a pleckstrin homology (PH) domain conferring phosphoinositide binding specificity region. A PI3K/PI4K catalytic domain is found at Val1734–Thr2012. The segment at Leu1740–Val1746 is G-loop. A catalytic loop region spans residues Gln1876–Asn1884. The tract at residues His1895–Ser1920 is activation loop.

This sequence belongs to the PI3/PI4-kinase family. Type III PI4K subfamily. As to quaternary structure, interacts in vitro with actin filaments via its PH domain. Present in leaves and inflorescences.

It localises to the membrane. Its subcellular location is the cytoplasm. The protein localises to the perinuclear region. It carries out the reaction a 1,2-diacyl-sn-glycero-3-phospho-(1D-myo-inositol) + ATP = a 1,2-diacyl-sn-glycero-3-phospho-(1D-myo-inositol 4-phosphate) + ADP + H(+). With respect to regulation, repressed by PtdIns4P, adenosine and wortmannin, but stimulated by other negatively charged lipids such as PtdIns3P, PtdOH, and phosphatidyl-serine (PtdSer). Acts on phosphatidylinositol (PtdIns) in the first committed step in the production of the second messenger inositol-1,4,5,-trisphosphate. Can bind to phosphatidylinositol 4-monophosphate (PI-4-P or PtdIns4P), phosphatidylinositol 4,5-bisphosphate (PI-4,5-P2 or PtdIns4,5P2), and phosphatidic acid (PtdOH), but not to 3-phosphoinositides. May function upstream of the cold response phosphoinositide-dependent phospholipase C (PI-PLC) pathway. The protein is Phosphatidylinositol 4-kinase alpha 1 of Arabidopsis thaliana (Mouse-ear cress).